Here is a 500-residue protein sequence, read N- to C-terminus: Probable malate:quinone oxidoreductase (500 aa).

The protein belongs to the MQO family. Requires FAD as cofactor.

The enzyme catalyses (S)-malate + a quinone = a quinol + oxaloacetate. Its pathway is carbohydrate metabolism; tricarboxylic acid cycle; oxaloacetate from (S)-malate (quinone route): step 1/1. This Bacillus cereus (strain G9842) protein is Probable malate:quinone oxidoreductase.